Reading from the N-terminus, the 450-residue chain is Bifunctional protein GlmU (450 aa).

A pyrophosphorylase region spans residues Met1 to Arg229. UDP-N-acetyl-alpha-D-glucosamine-binding positions include Leu8–Gly11, Lys22, Gln72, and Gly77–Thr78. Residue Asp102 coordinates Mg(2+). Residues Gly139, Glu154, and Asn227 each coordinate UDP-N-acetyl-alpha-D-glucosamine. A Mg(2+)-binding site is contributed by Asn227. The tract at residues Val230–Asn250 is linker. Residues Gly251–Lys450 form an N-acetyltransferase region. UDP-N-acetyl-alpha-D-glucosamine is bound by residues Arg332 and Lys350. His362 (proton acceptor) is an active-site residue. UDP-N-acetyl-alpha-D-glucosamine-binding residues include Tyr365 and Asn376. Residues Asn385 to Tyr386, Ala422, and Arg439 each bind acetyl-CoA.

The protein in the N-terminal section; belongs to the N-acetylglucosamine-1-phosphate uridyltransferase family. In the C-terminal section; belongs to the transferase hexapeptide repeat family. In terms of assembly, homotrimer. It depends on Mg(2+) as a cofactor.

The protein localises to the cytoplasm. The catalysed reaction is alpha-D-glucosamine 1-phosphate + acetyl-CoA = N-acetyl-alpha-D-glucosamine 1-phosphate + CoA + H(+). It catalyses the reaction N-acetyl-alpha-D-glucosamine 1-phosphate + UTP + H(+) = UDP-N-acetyl-alpha-D-glucosamine + diphosphate. It participates in nucleotide-sugar biosynthesis; UDP-N-acetyl-alpha-D-glucosamine biosynthesis; N-acetyl-alpha-D-glucosamine 1-phosphate from alpha-D-glucosamine 6-phosphate (route II): step 2/2. It functions in the pathway nucleotide-sugar biosynthesis; UDP-N-acetyl-alpha-D-glucosamine biosynthesis; UDP-N-acetyl-alpha-D-glucosamine from N-acetyl-alpha-D-glucosamine 1-phosphate: step 1/1. The protein operates within bacterial outer membrane biogenesis; LPS lipid A biosynthesis. In terms of biological role, catalyzes the last two sequential reactions in the de novo biosynthetic pathway for UDP-N-acetylglucosamine (UDP-GlcNAc). The C-terminal domain catalyzes the transfer of acetyl group from acetyl coenzyme A to glucosamine-1-phosphate (GlcN-1-P) to produce N-acetylglucosamine-1-phosphate (GlcNAc-1-P), which is converted into UDP-GlcNAc by the transfer of uridine 5-monophosphate (from uridine 5-triphosphate), a reaction catalyzed by the N-terminal domain. In Staphylococcus aureus (strain Mu50 / ATCC 700699), this protein is Bifunctional protein GlmU.